The sequence spans 874 residues: Coatomer subunit gamma-1 (874 aa).

A compositionally biased stretch (basic and acidic residues) spans 1–11; that stretch reads MLKKFDKKDEE. A disordered region spans residues 1–21; sequence MLKKFDKKDEESGGGSNPLQH. HEAT repeat units lie at residues 64–101, 283–320, 322–355, and 356–392; these read TEAT…IAED, KELA…KHPS, VTAC…GSES, and SIDR…KYPR. Thr-594 bears the Phosphothreonine mark. Positions 609-874 are interaction with ZNF289/ARFGAP2; the sequence is RQEIFQEQLA…PVDIILASVG (266 aa).

The protein belongs to the COPG family. In terms of assembly, oligomeric complex that consists of at least the alpha, beta, beta', gamma, delta, epsilon and zeta subunits. Interacts with ZNF289/ARFGAP2 through its C-terminal appendage domain. Interacts with EGFR upon EGF treatment; interaction is essential for regulation of EGF-dependent nuclear transport of EGFR by retrograde trafficking from the Golgi to the ER. The coatomer interacts with KDEL receptors; the interaction is important for retrograde trafficking of KDEL-bearing proteins from the Golgi to the endoplasmic reticulum. Interacts with COPB1. Interacts with TMED10 (via C-terminus). Interacts with TMED2, TMED3, TMED7 and TMED9.

It is found in the cytoplasm. The protein resides in the cytosol. The protein localises to the golgi apparatus membrane. It localises to the cytoplasmic vesicle. Its subcellular location is the COPI-coated vesicle membrane. In terms of biological role, the coatomer is a cytosolic protein complex that binds to dilysine motifs and reversibly associates with Golgi non-clathrin-coated vesicles, which further mediate biosynthetic protein transport from the ER, via the Golgi up to the trans Golgi network. Coatomer complex is required for budding from Golgi membranes, and is essential for the retrograde Golgi-to-ER transport of dilysine-tagged proteins. In mammals, the coatomer can only be recruited by membranes associated to ADP-ribosylation factors (ARFs), which are small GTP-binding proteins; the complex also influences the Golgi structural integrity, as well as the processing, activity, and endocytic recycling of LDL receptors. Required for limiting lipid storage in lipid droplets. Involved in lipid homeostasis by regulating the presence of perilipin family members PLIN2 and PLIN3 at the lipid droplet surface and promoting the association of adipocyte triglyceride lipase (PNPLA2) with the lipid droplet surface to mediate lipolysis. The protein is Coatomer subunit gamma-1 (Copg1) of Rattus norvegicus (Rat).